A 25-amino-acid polypeptide reads, in one-letter code: Defensin D3 (25 aa).

Belongs to the DEFL family. Group IV subfamily. Distributed in the epidermal cell layer of leaves and in the subepidermal layer region of stems. Not in roots.

The protein localises to the secreted. The protein resides in the cell wall. Its function is as follows. Antimicrobial peptide. Active against Fusarium spp., Gram-positive and Gram-negative bacterial pathogens. The protein is Defensin D3 of Spinacia oleracea (Spinach).